Consider the following 163-residue polypeptide: Putative 4-hydroxy-4-methyl-2-oxoglutarate aldolase (163 aa).

Residues 75 to 78 (GDQL) and Arg-97 each bind substrate. Residue Asp-98 coordinates a divalent metal cation.

The protein belongs to the class II aldolase/RraA-like family. Homotrimer. Requires a divalent metal cation as cofactor.

It catalyses the reaction 4-hydroxy-4-methyl-2-oxoglutarate = 2 pyruvate. It carries out the reaction oxaloacetate + H(+) = pyruvate + CO2. Functionally, catalyzes the aldol cleavage of 4-hydroxy-4-methyl-2-oxoglutarate (HMG) into 2 molecules of pyruvate. Also contains a secondary oxaloacetate (OAA) decarboxylase activity due to the common pyruvate enolate transition state formed following C-C bond cleavage in the retro-aldol and decarboxylation reactions. This Photobacterium profundum (strain SS9) protein is Putative 4-hydroxy-4-methyl-2-oxoglutarate aldolase.